Consider the following 112-residue polypeptide: Colipase (112 aa).

The signal sequence occupies residues 1 to 17 (MEKILILLLVALSVAYA). The propeptide at 18 to 22 (APGPR) is enterostatin, activation peptide. 5 disulfides stabilise this stretch: cysteine 34/cysteine 45, cysteine 40/cysteine 56, cysteine 44/cysteine 78, cysteine 66/cysteine 86, and cysteine 80/cysteine 104.

The protein belongs to the colipase family. As to quaternary structure, forms a 1:1 stoichiometric complex with pancreatic lipase. As to expression, expressed by the pancreas.

It localises to the secreted. Colipase is a cofactor of pancreatic lipase. It allows the lipase to anchor itself to the lipid-water interface. Without colipase the enzyme is washed off by bile salts, which have an inhibitory effect on the lipase. Functionally, enterostatin has a biological activity as a satiety signal. This chain is Colipase, found in Homo sapiens (Human).